Reading from the N-terminus, the 297-residue chain is MPTLFALKERIAQVVQEKNDPIVTAVATTLAEQQYNACFSAEQVKLWKRQFKCSSVELALACLPIAACYALVPISNFYVGAVAIGESGRFYFGANQEFNAQAIQQTVHAEQSAISHAWLAGETAITDMVVNYTPCGHCRQFMNELNSAKTLKIHLPHSQNNLLRQYLPDSFGPKDLNIEKVLFDQQTHSLPLRGDLLTQAAIQTAAQSYAPYSKSLSGIALQVGEQIICGRYAENAAFNPSFLPLQSALNYRRLSGKSDERISRIVMAESKGTTSHRQMSEALAESFLGLNLEYIEV.

CMP/dCMP-type deaminase domains lie at 54–174 (SSVE…FGPK) and 192–297 (LRGD…YIEV). Residue 95–97 (NQE) coordinates substrate. H108 lines the Zn(2+) pocket. The Proton donor role is filled by E110. Residues C135 and C138 each coordinate Zn(2+).

This sequence belongs to the cytidine and deoxycytidylate deaminase family. Homodimer. Requires Zn(2+) as cofactor.

It catalyses the reaction cytidine + H2O + H(+) = uridine + NH4(+). The catalysed reaction is 2'-deoxycytidine + H2O + H(+) = 2'-deoxyuridine + NH4(+). Its function is as follows. This enzyme scavenges exogenous and endogenous cytidine and 2'-deoxycytidine for UMP synthesis. This Actinobacillus pleuropneumoniae serotype 5b (strain L20) protein is Cytidine deaminase.